Consider the following 1408-residue polypeptide: DNA-directed RNA polymerase subunit beta' (1408 aa).

Residues C70, C72, C85, and C88 each coordinate Zn(2+). Mg(2+) is bound by residues D460, D462, and D464. Residues C814, C888, C895, and C898 each coordinate Zn(2+).

The protein belongs to the RNA polymerase beta' chain family. In terms of assembly, the RNAP catalytic core consists of 2 alpha, 1 beta, 1 beta' and 1 omega subunit. When a sigma factor is associated with the core the holoenzyme is formed, which can initiate transcription. Requires Mg(2+) as cofactor. Zn(2+) serves as cofactor.

It catalyses the reaction RNA(n) + a ribonucleoside 5'-triphosphate = RNA(n+1) + diphosphate. Its function is as follows. DNA-dependent RNA polymerase catalyzes the transcription of DNA into RNA using the four ribonucleoside triphosphates as substrates. This chain is DNA-directed RNA polymerase subunit beta', found in Shewanella frigidimarina (strain NCIMB 400).